The sequence spans 229 residues: Large ribosomal subunit protein uL1 (229 aa).

Belongs to the universal ribosomal protein uL1 family. In terms of assembly, part of the 50S ribosomal subunit.

Binds directly to 23S rRNA. The L1 stalk is quite mobile in the ribosome, and is involved in E site tRNA release. In terms of biological role, protein L1 is also a translational repressor protein, it controls the translation of the L11 operon by binding to its mRNA. The protein is Large ribosomal subunit protein uL1 of Pediococcus pentosaceus (strain ATCC 25745 / CCUG 21536 / LMG 10740 / 183-1w).